A 653-amino-acid chain; its full sequence is Probable potassium transport system protein Kup (653 aa).

A run of 12 helical transmembrane segments spans residues 37-57 (ALLA…SPLY), 79-99 (VLSL…LLLV), 134-154 (ITLG…TPAI), 168-188 (AVFD…LFLV), 196-216 (IGAV…GLGV), 243-263 (LHGF…EALY), 278-298 (WFSM…ALLL), 320-340 (LVAL…AGVF), 368-388 (IYLP…VLGF), 397-417 (AYGI…YVVA), 426-446 (WVAI…FGAN), and 450-470 (VADG…LMTT).

The protein belongs to the HAK/KUP transporter (TC 2.A.72) family.

It localises to the cell inner membrane. It carries out the reaction K(+)(in) + H(+)(in) = K(+)(out) + H(+)(out). Functionally, transport of potassium into the cell. Likely operates as a K(+):H(+) symporter. This Myxococcus xanthus (strain DK1622) protein is Probable potassium transport system protein Kup.